The primary structure comprises 1017 residues: Formin-binding protein 4 (1017 aa).

2 disordered regions span residues 1 to 141 (MGKK…STDI) and 160 to 202 (PAAP…TSGW). Residue Ser-18 is modified to Phosphoserine. Residues 40–69 (DSTAAVPSQPAPSAATTTTTAVTAAAASDD) show a composition bias toward low complexity. 2 positions are modified to phosphoserine: Ser-116 and Ser-124. The segment covering 130-141 (SKETNGNQSTDI) has biased composition (polar residues). Thr-172 is modified (phosphothreonine). Over residues 181–200 (AATSTLSSSTSNGTDSTQTS) the composition is skewed to low complexity. The 35-residue stretch at 214–248 (GIEMGDWQEVWDENTGCYYYWNTQTNEVTWELPQY) folds into the WW 1 domain. Residue Lys-290 is modified to N6-acetyllysine. A Glycyl lysine isopeptide (Lys-Gly) (interchain with G-Cter in SUMO1) cross-link involves residue Lys-301. Lys-335 participates in a covalent cross-link: Glycyl lysine isopeptide (Lys-Gly) (interchain with G-Cter in SUMO2). Residue Lys-348 forms a Glycyl lysine isopeptide (Lys-Gly) (interchain with G-Cter in SUMO1); alternate linkage. Lys-348 participates in a covalent cross-link: Glycyl lysine isopeptide (Lys-Gly) (interchain with G-Cter in SUMO2); alternate. Disordered stretches follow at residues 421-519 (LEEG…TTPK), 621-676 (ESQW…CKES), 706-792 (PLPL…IKRK), and 899-994 (TATI…AERN). Ser-427, Ser-432, Ser-435, Ser-438, and Ser-442 each carry phosphoserine. The segment covering 428-442 (VSGSSPRSDISQPAS) has biased composition (polar residues). Basic residues predominate over residues 449 to 458 (LMSKRGKWKM). The segment covering 461 to 474 (RATSPESTSRSSSK) has biased composition (low complexity). Position 464 is a phosphoserine (Ser-464). Thr-479 carries the post-translational modification Phosphothreonine. Over residues 491-513 (NSEKIDENSDKEMEVEESPEKIK) the composition is skewed to basic and acidic residues. A phosphoserine mark is found at Ser-499 and Ser-508. 2 positions are modified to phosphothreonine: Thr-516 and Thr-517. Lys-519 is covalently cross-linked (Glycyl lysine isopeptide (Lys-Gly) (interchain with G-Cter in SUMO1); alternate). Residue Lys-519 forms a Glycyl lysine isopeptide (Lys-Gly) (interchain with G-Cter in SUMO2); alternate linkage. The WW 2 domain occupies 595–629 (NATPKGWSCHWDRDHRRYFYVNEQSGESQWEFPDG). Acidic residues predominate over residues 627-637 (PDGEEEEEESQ). A compositionally biased stretch (basic and acidic residues) spans 640-656 (ENRDETLAKQTLKDKTG). The span at 657 to 671 (TDSNSTESSETSTGS) shows a compositional bias: low complexity. Residues 706–732 (PLPLEMPPPPPPPPESPPPPPPPPPPA) show a composition bias toward pro residues. Acidic residues predominate over residues 733–748 (EDGEIQEVEMEDEGSE). The segment covering 764–786 (SAQTTVVTSQSSVDSTISSSSST) has biased composition (low complexity). Positions 904–925 (EPPPPPPPPPPPPPPAPKMPPP) are enriched in pro residues. Residues 929–941 (KKGRKDKAKKSKT) are compositionally biased toward basic residues. Positions 957–970 (LDEEDNSSSSEEDR) are enriched in acidic residues. Phosphoserine occurs at positions 963, 964, and 965. Residues 971 to 982 (ESTAQKRIEEWK) are compositionally biased toward basic and acidic residues.

As to quaternary structure, binds FMN1. Interacts with the Arg/Gly-rich-flanked Pro-rich of KHDRBS1/SAM68. Arginine methylation in these regions has no effect on this binding. In terms of tissue distribution, highly expressed in the eye.

In Homo sapiens (Human), this protein is Formin-binding protein 4 (FNBP4).